A 148-amino-acid polypeptide reads, in one-letter code: Ribonuclease H (148 aa).

The region spanning 3-144 is the RNase H type-1 domain; sequence DKEQVVIYTD…ADQLANRGVA (142 aa). 4 residues coordinate Mg(2+): aspartate 12, glutamate 50, aspartate 72, and aspartate 136. The interval 125–148 is disordered; that stretch reads GHTGDPGNERADQLANRGVAELPR.

The protein belongs to the RNase H family. As to quaternary structure, monomer. Mg(2+) is required as a cofactor.

It localises to the cytoplasm. The catalysed reaction is Endonucleolytic cleavage to 5'-phosphomonoester.. In terms of biological role, endonuclease that specifically degrades the RNA of RNA-DNA hybrids. The chain is Ribonuclease H from Pseudomonas aeruginosa (strain LESB58).